Here is a 282-residue protein sequence, read N- to C-terminus: Aminoglycoside 6-adenylyltransferase (282 aa).

The enzyme catalyses streptomycin + ATP = 6-O-adenylylstreptomycin + diphosphate. Its function is as follows. Required for streptomycin resistance. Adenylates streptomycin on the O-6 residue. The sequence is that of Aminoglycoside 6-adenylyltransferase from Staphylococcus aureus.